A 183-amino-acid polypeptide reads, in one-letter code: Small ribosomal subunit protein uS4c (183 aa).

Residues 82 to 143 form the S4 RNA-binding domain; it reads MRLDNILFRL…KQRSKALIQN (62 aa).

It belongs to the universal ribosomal protein uS4 family. As to quaternary structure, part of the 30S ribosomal subunit. Contacts protein S5. The interaction surface between S4 and S5 is involved in control of translational fidelity.

It localises to the plastid. It is found in the chloroplast. One of the primary rRNA binding proteins, it binds directly to 16S rRNA where it nucleates assembly of the body of the 30S subunit. Functionally, with S5 and S12 plays an important role in translational accuracy. The sequence is that of Small ribosomal subunit protein uS4c (rps4) from Sparaxis sp. (strain Lejeune 1997).